We begin with the raw amino-acid sequence, 267 residues long: Inositol-1-monophosphatase (267 aa).

Residues Glu-66, Asp-84, Leu-86, and Asp-87 each coordinate Mg(2+). Glu-66 lines the substrate pocket. Substrate is bound by residues 86–89 (LDGS), Arg-182, and Asp-213. Asp-213 serves as a coordination point for Mg(2+).

Belongs to the inositol monophosphatase superfamily. Requires Mg(2+) as cofactor.

It carries out the reaction a myo-inositol phosphate + H2O = myo-inositol + phosphate. This Aeropyrum pernix (strain ATCC 700893 / DSM 11879 / JCM 9820 / NBRC 100138 / K1) protein is Inositol-1-monophosphatase (suhB).